The sequence spans 34 residues: Photosystem II reaction center protein Psb30 (34 aa).

The helical transmembrane segment at 6-26 (VIGQLTSLAMIVLVGPAVIVV) threads the bilayer.

The protein belongs to the Psb30/Ycf12 family. PSII is composed of 1 copy each of membrane proteins PsbA, PsbB, PsbC, PsbD, PsbE, PsbF, PsbH, PsbI, PsbJ, PsbK, PsbL, PsbM, PsbT, PsbX, PsbY, PsbZ, Psb30/Ycf12, peripheral proteins of the oxygen-evolving complex and a large number of cofactors. It forms dimeric complexes.

It is found in the plastid. The protein localises to the chloroplast thylakoid membrane. In terms of biological role, a core subunit of photosystem II (PSII), probably helps stabilize the reaction center. This Gracilaria tenuistipitata var. liui (Red alga) protein is Photosystem II reaction center protein Psb30.